The primary structure comprises 364 residues: Uroporphyrinogen decarboxylase (364 aa).

Residues 28 to 32, Phe-47, Asp-78, Tyr-158, Thr-213, and His-334 each bind substrate; that span reads RQAGR.

This sequence belongs to the uroporphyrinogen decarboxylase family. Homodimer.

The protein resides in the cytoplasm. The enzyme catalyses uroporphyrinogen III + 4 H(+) = coproporphyrinogen III + 4 CO2. The protein operates within porphyrin-containing compound metabolism; protoporphyrin-IX biosynthesis; coproporphyrinogen-III from 5-aminolevulinate: step 4/4. Catalyzes the decarboxylation of four acetate groups of uroporphyrinogen-III to yield coproporphyrinogen-III. This is Uroporphyrinogen decarboxylase from Ralstonia nicotianae (strain ATCC BAA-1114 / GMI1000) (Ralstonia solanacearum).